The sequence spans 221 residues: Glutathione S-transferase A3 (221 aa).

N-acetylalanine is present on A2. Positions 3 to 83 constitute a GST N-terminal domain; the sequence is GKPVLHYFDG…YIASKYNLYG (81 aa). Position 4 is an N6-succinyllysine (K4). Residues Y9, R45, 54–55, and 67–68 each bind glutathione; these read QV and QT. A GST C-terminal domain is found at 85–207; sequence DMKERAIIDM…LQPGSQRKPF (123 aa).

In terms of assembly, homodimer.

The protein localises to the cytoplasm. It carries out the reaction RX + glutathione = an S-substituted glutathione + a halide anion + H(+). The catalysed reaction is androst-5-ene-3,17-dione = androst-4-ene-3,17-dione. The enzyme catalyses pregn-5-ene-3,20-dione = progesterone. Functionally, conjugation of reduced glutathione to a wide number of exogenous and endogenous hydrophobic electrophiles. Catalyzes isomerization reactions that contribute to the biosynthesis of steroid hormones. Efficiently catalyze obligatory double-bond isomerizations of delta(5)-androstene-3,17-dione and delta(5)-pregnene-3,20-dione, precursors to testosterone and progesterone, respectively. Has a high catalytic activity for aflatoxin B1-8,9 epoxide. The protein is Glutathione S-transferase A3 of Mus musculus (Mouse).